The primary structure comprises 752 residues: Translation initiation factor IF-2 (752 aa).

The segment at 26-167 is disordered; that stretch reads RQGMGVKSHM…QPTQRKDKPL (142 aa). Positions 34–47 are enriched in polar residues; sequence HMSSVTPDQAQQLR. The segment covering 72 to 81 has biased composition (low complexity); the sequence is KQNNHQAQNH. Basic and acidic residues predominate over residues 83 to 96; it reads QHHDHDKTQNERPQ. Residues 101-129 are compositionally biased toward polar residues; it reads SRSNNGTKDNNQHQNNGGRFGGSLNNDQG. The span at 131 to 150 shows a compositional bias: basic residues; that stretch reads NGKRFNKKNKKNKKHNKNKR. Positions 151 to 167 are enriched in basic and acidic residues; the sequence is LREVAHKQPTQRKDKPL. In terms of domain architecture, tr-type G spans 253 to 422; the sequence is TRPAVVTVMG…LLQAEMLELK (170 aa). The G1 stretch occupies residues 262–269; that stretch reads GHVDHGKT. 262 to 269 is a binding site for GTP; it reads GHVDHGKT. Positions 287–291 are G2; it reads GITQE. The interval 308 to 311 is G3; sequence DTPG. GTP-binding positions include 308-312 and 362-365; these read DTPGH and NKID. The segment at 362–365 is G4; sequence NKID. The interval 398 to 400 is G5; sequence SAK.

Belongs to the TRAFAC class translation factor GTPase superfamily. Classic translation factor GTPase family. IF-2 subfamily.

It is found in the cytoplasm. In terms of biological role, one of the essential components for the initiation of protein synthesis. Protects formylmethionyl-tRNA from spontaneous hydrolysis and promotes its binding to the 30S ribosomal subunits. Also involved in the hydrolysis of GTP during the formation of the 70S ribosomal complex. The protein is Translation initiation factor IF-2 of Limosilactobacillus reuteri (strain DSM 20016) (Lactobacillus reuteri).